Reading from the N-terminus, the 575-residue chain is Physarolisin (575 aa).

The signal sequence occupies residues 1-18 (MRLLSLLFLLGLATLSFA). The propeptide at 19-173 (VRSQWAQQGR…SIKNARTQVG (155 aa)) is removed in mature form. Residues 179–574 (YIVPYVIFDL…SKLLAFVQTL (396 aa)) enclose the Peptidase S53 domain. The N-linked (GlcNAc...) asparagine glycan is linked to Asn200. Catalysis depends on charge relay system residues Glu248 and Asp252. 4 N-linked (GlcNAc...) asparagine glycosylation sites follow: Asn262, Asn307, Asn380, and Asn453. Ser484 functions as the Charge relay system in the catalytic mechanism. Asp529, Ile530, Gly552, and Asp554 together coordinate Ca(2+).

It depends on Ca(2+) as a cofactor. Post-translationally, autocatalytically processed. In terms of processing, N-glycosylated.

It catalyses the reaction Milk clotting activity. Preferential cleavage of 8-Gly-|-Ser-9 in B chain of insulin most rapidly, followed by 11-Leu-|-Val-12, 19-Cys(SO(3)H)-|-Gly and 24-Phe-|-Phe-25. No action on Ac-Phe-Tyr(I)2.. Its activity is regulated as follows. Inhibited by diisopropylfluorophosphate (DFP) and diazoacetyl-D,L-norleucine methyl ester (DAN). This Physarum polycephalum (Slime mold) protein is Physarolisin.